The chain runs to 93 residues: DNA-directed RNA polymerase subunit omega (93 aa).

The protein belongs to the RNA polymerase subunit omega family. As to quaternary structure, the RNAP catalytic core consists of 2 alpha, 1 beta, 1 beta' and 1 omega subunit. When a sigma factor is associated with the core the holoenzyme is formed, which can initiate transcription.

It catalyses the reaction RNA(n) + a ribonucleoside 5'-triphosphate = RNA(n+1) + diphosphate. In terms of biological role, promotes RNA polymerase assembly. Latches the N- and C-terminal regions of the beta' subunit thereby facilitating its interaction with the beta and alpha subunits. This Shewanella piezotolerans (strain WP3 / JCM 13877) protein is DNA-directed RNA polymerase subunit omega.